The primary structure comprises 139 residues: Putative flagella-related protein F (139 aa).

The first 18 residues, M1–V18, serve as a signal peptide directing secretion. C19 is subject to N-acetylcysteine. C19 carries the S-archaeol cysteine lipid modification.

The protein to M.voltae FlaF.

Its subcellular location is the archaeal flagellum. It localises to the membrane. The polypeptide is Putative flagella-related protein F (flaF) (Methanocaldococcus jannaschii (strain ATCC 43067 / DSM 2661 / JAL-1 / JCM 10045 / NBRC 100440) (Methanococcus jannaschii)).